Consider the following 433-residue polypeptide: Probable phosphoglucosamine mutase (433 aa).

Catalysis depends on Ser-91, which acts as the Phosphoserine intermediate. The Mg(2+) site is built by Ser-91, Asp-229, Asp-231, and Asp-233. Ser-91 carries the post-translational modification Phosphoserine.

It belongs to the phosphohexose mutase family. The cofactor is Mg(2+). Post-translationally, activated by phosphorylation.

It catalyses the reaction alpha-D-glucosamine 1-phosphate = D-glucosamine 6-phosphate. Functionally, catalyzes the conversion of glucosamine-6-phosphate to glucosamine-1-phosphate. The chain is Probable phosphoglucosamine mutase from Methanococcoides burtonii (strain DSM 6242 / NBRC 107633 / OCM 468 / ACE-M).